The following is a 236-amino-acid chain: Peptidase E (236 aa).

Catalysis depends on charge relay system residues Ser122, Asp137, and His159.

Belongs to the peptidase S51 family.

Its subcellular location is the cytoplasm. The catalysed reaction is Dipeptidase E catalyzes the hydrolysis of dipeptides Asp-|-Xaa. It does not act on peptides with N-terminal Glu, Asn or Gln, nor does it cleave isoaspartyl peptides.. Its function is as follows. Hydrolyzes dipeptides containing N-terminal aspartate residues. May play a role in allowing the cell to use peptide aspartate to spare carbon otherwise required for the synthesis of the aspartate family of amino acids. The sequence is that of Peptidase E from Shewanella sp. (strain W3-18-1).